Here is a 910-residue protein sequence, read N- to C-terminus: Ubiquitin carboxyl-terminal hydrolase 9 (910 aa).

The region spanning 19 to 134 (TTPEEEKRIV…GGPPIERKLI (116 aa)) is the DUSP domain. A disordered region spans residues 68-89 (ISGESSEASRPGPIDNHDIIES). Positions 303–894 (AGLSNLGNTC…AAYVLFYRRV (592 aa)) constitute a USP domain. The Nucleophile role is filled by Cys-312. The active-site Proton acceptor is the His-852.

Belongs to the peptidase C19 family.

The catalysed reaction is Thiol-dependent hydrolysis of ester, thioester, amide, peptide and isopeptide bonds formed by the C-terminal Gly of ubiquitin (a 76-residue protein attached to proteins as an intracellular targeting signal).. Recognizes and hydrolyzes the peptide bond at the C-terminal Gly of ubiquitin. Involved in the processing of poly-ubiquitin precursors as well as that of ubiquitinated proteins. The protein is Ubiquitin carboxyl-terminal hydrolase 9 (UBP9) of Arabidopsis thaliana (Mouse-ear cress).